Consider the following 192-residue polypeptide: AYSWDNRVKYVVRYMYDIDNNGFLDKNDFECLALRNTLIEGRGEFNEAAYANNQKIMSNLWNEIAELADFNKDGEVTIDEFKKAVQNVCVGKAFATFPAAFKVFIANQFKTVDVNGDGLVGVDEYRLDCISRSAFANIKEIDDAYNKLATDADKKAGGISLARYQELYAQFISNPDESANAVYLFGPLKEVQ.

The residue at position 1 (A1) is an N-acetylalanine. EF-hand domains lie at 4 to 39 (WDNR…NTLI), 56 to 91 (IMSN…VCVG), 100 to 135 (AFKV…RSAF), and 136 to 171 (ANIK…YAQF). Residues D17, D19, N21, D28, D69, N71, D73, E75, E80, D113, N115, D117, and E124 each coordinate Ca(2+).

SCPs from crayfish, lobster, and shrimp are polymorphic dimers.

Like parvalbumins, SCPs seem to be more abundant in fast contracting muscles, but no functional relationship can be established from this distribution. The polypeptide is Sarcoplasmic calcium-binding protein 1 (Astacus leptodactylus (Turkish narrow-clawed crayfish)).